The following is a 342-amino-acid chain: Heat-inducible transcription repressor HrcA (342 aa).

It belongs to the HrcA family.

Its function is as follows. Negative regulator of class I heat shock genes (grpE-dnaK-dnaJ and groELS operons). Prevents heat-shock induction of these operons. The protein is Heat-inducible transcription repressor HrcA of Acholeplasma laidlawii.